The sequence spans 30 residues: Photosystem II reaction center protein Psb30 (30 aa).

Residues Glu-1 to Leu-6 are Lumenal-facing. Residues Thr-7 to Phe-21 form a helical membrane-spanning segment. The Cytoplasmic segment spans residues Leu-22–Leu-30.

The protein belongs to the Psb30/Ycf12 family. As to quaternary structure, PSII is composed of 1 copy each of membrane proteins PsbA, PsbB, PsbC, PsbD, PsbE, PsbF, PsbH, PsbI, PsbJ, PsbK, PsbL, PsbM, PsbT, PsbX, PsbY, PsbZ, Psb30/Ycf12, peripheral proteins PsbO, CyanoQ (PsbQ), PsbU, PsbV and a large number of cofactors. It forms dimeric complexes. Requires PSII binds multiple chlorophylls, carotenoids and specific lipids. as cofactor.

It is found in the cellular thylakoid membrane. A core subunit of photosystem II (PSII), probably helps stabilize the reaction center. PSII is a light-driven water plastoquinone oxidoreductase, using light energy to abstract electrons from H(2)O, generating a proton gradient subsequently used for ATP formation. The protein is Photosystem II reaction center protein Psb30 of Thermostichus vulcanus (Synechococcus vulcanus).